The primary structure comprises 122 residues: Large ribosomal subunit protein uL14 (122 aa).

Belongs to the universal ribosomal protein uL14 family. In terms of assembly, part of the 50S ribosomal subunit. Forms a cluster with proteins L3 and L19. In the 70S ribosome, L14 and L19 interact and together make contacts with the 16S rRNA in bridges B5 and B8.

In terms of biological role, binds to 23S rRNA. Forms part of two intersubunit bridges in the 70S ribosome. In Chelativorans sp. (strain BNC1), this protein is Large ribosomal subunit protein uL14.